Reading from the N-terminus, the 251-residue chain is Flap endonuclease Xni (251 aa).

Asp-104 provides a ligand contact to Mg(2+). The 91-residue stretch at 160–250 (VQPQQLPDYW…DGNLQQLRLK (91 aa)) folds into the 5'-3' exonuclease domain. Leu-171, Ala-172, Pro-180, Val-182, and Ile-185 together coordinate K(+). The tract at residues 184–189 (GIGPKS) is interaction with DNA.

It belongs to the Xni family. The cofactor is Mg(2+). K(+) serves as cofactor.

Has flap endonuclease activity. During DNA replication, flap endonucleases cleave the 5'-overhanging flap structure that is generated by displacement synthesis when DNA polymerase encounters the 5'-end of a downstream Okazaki fragment. The polypeptide is Flap endonuclease Xni (Escherichia fergusonii (strain ATCC 35469 / DSM 13698 / CCUG 18766 / IAM 14443 / JCM 21226 / LMG 7866 / NBRC 102419 / NCTC 12128 / CDC 0568-73)).